A 581-amino-acid chain; its full sequence is Proline--tRNA ligase (581 aa).

It belongs to the class-II aminoacyl-tRNA synthetase family. ProS type 1 subfamily. Homodimer.

The protein resides in the cytoplasm. The catalysed reaction is tRNA(Pro) + L-proline + ATP = L-prolyl-tRNA(Pro) + AMP + diphosphate. Functionally, catalyzes the attachment of proline to tRNA(Pro) in a two-step reaction: proline is first activated by ATP to form Pro-AMP and then transferred to the acceptor end of tRNA(Pro). As ProRS can inadvertently accommodate and process non-cognate amino acids such as alanine and cysteine, to avoid such errors it has two additional distinct editing activities against alanine. One activity is designated as 'pretransfer' editing and involves the tRNA(Pro)-independent hydrolysis of activated Ala-AMP. The other activity is designated 'posttransfer' editing and involves deacylation of mischarged Ala-tRNA(Pro). The misacylated Cys-tRNA(Pro) is not edited by ProRS. The polypeptide is Proline--tRNA ligase (Acidovorax ebreus (strain TPSY) (Diaphorobacter sp. (strain TPSY))).